A 124-amino-acid polypeptide reads, in one-letter code: Meiotically up-regulated gene 103 protein (124 aa).

The protein resides in the nucleus. The protein localises to the nucleolus. Its function is as follows. Has a role in meiosis. The sequence is that of Meiotically up-regulated gene 103 protein (mug103) from Schizosaccharomyces pombe (strain 972 / ATCC 24843) (Fission yeast).